The primary structure comprises 552 residues: Keratin, type II cytoskeletal 6A (552 aa).

The segment covering 1–14 has biased composition (polar residues); that stretch reads MSTKTVIRSQTSHR. Residues 1–21 are disordered; that stretch reads MSTKTVIRSQTSHRGFSAGSA. The interval 1–151 is head; that stretch reads MSTKTVIRSQ…DPTIQRVRTE (151 aa). The interval 152-187 is coil 1A; sequence EREQIKTLNNKFASFIDKVRFLEQQNKVLDTKWALL. The region spanning 152 to 465 is the IF rod domain; that stretch reads EREQIKTLNN…TLLEGEECRL (314 aa). The segment at 188–206 is linker 1; it reads QEQGTKTVRQGLETLFEQY. Residues 207-298 form a coil 1B region; the sequence is INDLRKELDN…ALYEAELSQM (92 aa). The interval 299-322 is linker 12; that stretch reads QTHISDTSVVLSMDNNRSLDLDSI. The segment at 323-461 is coil 2; the sequence is IAEVKAQYEE…ATYRTLLEGE (139 aa). Residues 462-552 are tail; sequence ECRLNGEGVG…TSSTRKSYRP (91 aa). Positions 524-552 are disordered; that stretch reads ISSGLSSSGGSSSTIKYTTTSSTRKSYRP. The segment covering 525-552 has biased composition (low complexity); sequence SSGLSSSGGSSSTIKYTTTSSTRKSYRP.

This sequence belongs to the intermediate filament family. In terms of assembly, heterodimer of a type I and a type II keratin. KRT6 isomers associate with KRT16 and/or KRT17. Interacts with TCHP.

Functionally, epidermis-specific type I keratin involved in wound healing. Involved in the activation of follicular keratinocytes after wounding, while it does not play a major role in keratinocyte proliferation or migration. Participates in the regulation of epithelial migration by inhibiting the activity of SRC during wound repair. The sequence is that of Keratin, type II cytoskeletal 6A (Krt6a) from Rattus norvegicus (Rat).